A 798-amino-acid polypeptide reads, in one-letter code: Neuroligin-1 (798 aa).

A signal peptide spans 1–17 (MERIYLLLLLFLPRIRS). Topologically, residues 18-685 (YDVRSVTTSW…AAGSFTGKAL (668 aa)) are extracellular. An intrachain disulfide couples Cys86 to Cys125. N-linked (GlcNAc...) asparagine glycans are attached at residues Asn164, Asn292, and Asn315. A disulfide bond links Cys288 and Cys307. Residues 636–676 (ANLPFPPPPMPPSPPPELTTKPKPSESPTTLQTTTESEKAA) form a disordered region. Over residues 639–652 (PFPPPPMPPSPPPE) the composition is skewed to pro residues. Low complexity predominate over residues 653-665 (LTTKPKPSESPTT). Residues 686-706 (GGVIFIGCGFLIMNVCLLIAV) traverse the membrane as a helical segment. Residues 707 to 798 (RREWGKKRRN…QAPTLEEIQV (92 aa)) lie on the Cytoplasmic side of the membrane. Positions 731–765 (HGGGAEQYNSLNSPEPLLSASHKNSTSMRPAGISP) are disordered.

It belongs to the type-B carboxylesterase/lipase family. In terms of assembly, interacts (via extracellular domain) with isoform b of madd-4; the interaction is required for the localization to postsynaptic domains. Interacts with unc-49.

It localises to the cell membrane. The protein localises to the synapse. Probable neuronal cell surface protein thought to be involved in cell-cell-interactions by forming intercellular junctions through binding to beta-neurexins. Plays a role in the clustering of the GABA(A) receptor unc-49 at postsynaptic sites in neuromuscular junctions (NMJs) via the interaction with madd-4 and neurexin nrx-1 and is thereby required for normal GABAergic synaptic transmission. The chain is Neuroligin-1 (nlg-1) from Caenorhabditis elegans.